Here is a 169-residue protein sequence, read N- to C-terminus: Cell division inhibitor SulA (169 aa).

The disordered stretch occupies residues 1–22 (MHTSIYANRSTSFSPSAGNDTQ). Residues 106-112 (ALRTGNY) are ftsZ binding. Residues 162–169 (KIHSNLYH) are lon protease binding.

Belongs to the SulA family. As to quaternary structure, interacts with FtsZ. Is rapidly cleaved and degraded by the Lon protease once DNA damage is repaired.

Its function is as follows. Component of the SOS system and an inhibitor of cell division. Accumulation of SulA causes rapid cessation of cell division and the appearance of long, non-septate filaments. In the presence of GTP, binds a polymerization-competent form of FtsZ in a 1:1 ratio, thus inhibiting FtsZ polymerization and therefore preventing it from participating in the assembly of the Z ring. This mechanism prevents the premature segregation of damaged DNA to daughter cells during cell division. This is Cell division inhibitor SulA from Enterobacter sp. (strain 638).